The primary structure comprises 302 residues: Mitochondrial adapter protein MCP1 (302 aa).

The disordered stretch occupies residues M1–R35. Residues M1–S61 are Cytoplasmic-facing. Positions L4–V12 match the PxP motif. Residues V62–V82 form a helical membrane-spanning segment. At S83 to P100 the chain is on the mitochondrial intermembrane side. Residues S101 to L121 form a helical membrane-spanning segment. Over R122 to Q173 the chain is Cytoplasmic. A helical transmembrane segment spans residues V174–V194. Residues P195–K219 lie on the Mitochondrial intermembrane side of the membrane. The helical transmembrane segment at W220–S240 threads the bilayer. At G241–S258 the chain is on the cytoplasmic side. The helical transmembrane segment at T259–M276 threads the bilayer. The Mitochondrial intermembrane segment spans residues K277–N302.

As to quaternary structure, interacts (via PxP motif) with VPS13 (via SHR-BD domain).

The protein localises to the mitochondrion outer membrane. In terms of biological role, recruits the lipid transfer protein Vps13 to mitochondria thereby promoting vacuole-mitochondria contacts. Involved in mitochondrial lipid homeostasis. This Saccharomyces cerevisiae (strain ATCC 204508 / S288c) (Baker's yeast) protein is Mitochondrial adapter protein MCP1.